Here is a 292-residue protein sequence, read N- to C-terminus: MFEPVPDLNLEASVELGEVNIDQTTPMIKENSGFISRSRRLFAHRSKDDERKLALRFFLQRLYFLDHREIHYLFRCVDAVKDVTITKKNNIIVAPYIALLTIASKGCKLTETMIEAFFPELYNEHSKKFKFNSQVSIIQEKLGYQSGNYHVYDFEPYYSTVALAIRDEHSSGIFNIRQESYLVSSLSEITYRFYLINLKSDLVQWSASTGAVINQMVNTVLITVYEKLQLAIENDSQFTCSLAVESELPIKLLKDRNELFTKFINELKKTSSFKISKRDKDTLLKHFTYDWS.

The protein belongs to the orthopoxvirus OPG134 family. Heterodimer of a 45 kDa (A23R) and a 32 kDa (A8R) subunit to form the virus intermediate transcription factor (VITF)-3.

In terms of biological role, acts with RNA polymerase to initiate transcription from intermediate gene promoters. The sequence is that of Intermediate transcription factor 3 small subunit (OPG134) from Monkeypox virus.